The sequence spans 126 residues: Large ribosomal subunit protein bL19 (126 aa).

It belongs to the bacterial ribosomal protein bL19 family.

In terms of biological role, this protein is located at the 30S-50S ribosomal subunit interface and may play a role in the structure and function of the aminoacyl-tRNA binding site. This is Large ribosomal subunit protein bL19 from Paracoccus denitrificans (strain Pd 1222).